Here is a 295-residue protein sequence, read N- to C-terminus: 4-diphosphocytidyl-2-C-methyl-D-erythritol kinase (295 aa).

Lys-15 is a catalytic residue. Pro-102–Ser-112 lines the ATP pocket. Residue Asp-144 is part of the active site.

It belongs to the GHMP kinase family. IspE subfamily.

It catalyses the reaction 4-CDP-2-C-methyl-D-erythritol + ATP = 4-CDP-2-C-methyl-D-erythritol 2-phosphate + ADP + H(+). Its pathway is isoprenoid biosynthesis; isopentenyl diphosphate biosynthesis via DXP pathway; isopentenyl diphosphate from 1-deoxy-D-xylulose 5-phosphate: step 3/6. Its function is as follows. Catalyzes the phosphorylation of the position 2 hydroxy group of 4-diphosphocytidyl-2C-methyl-D-erythritol. In Mesorhizobium japonicum (strain LMG 29417 / CECT 9101 / MAFF 303099) (Mesorhizobium loti (strain MAFF 303099)), this protein is 4-diphosphocytidyl-2-C-methyl-D-erythritol kinase.